We begin with the raw amino-acid sequence, 280 residues long: Transcription factor MYB60 (280 aa).

HTH myb-type domains are found at residues 9–65 (KIGI…RPGI) and 66–116 (KRGN…KKKL). DNA-binding regions (H-T-H motif) lie at residues 37 to 61 (WRSVPTNTGLLRCSKSCRLRWTNYL) and 89 to 112 (WASIASYLPQRTDNDIKNYWNTHL). Cysteine 49 and cysteine 53 each carry S-nitrosocysteine. Positions 118-127 (KSDSDERSRS) are enriched in basic and acidic residues. 2 disordered regions span residues 118 to 149 (KSDSDERSRSENIALQTSSTRNTINHRSTYAS) and 204 to 247 (EEGH…NATP). The segment covering 128–149 (ENIALQTSSTRNTINHRSTYAS) has biased composition (polar residues).

Specifically expressed in guard cells. Present in seedlings, leaves, stems and flowers.

Its subcellular location is the nucleus. Functionally, transcription factor involved in the regulation of gene (e.g. drought-regulated and flavonoid biosynthetic genes) expression and stomatal movements leading to negative regulation of responses to drought and responses to other physiological stimuli (e.g. light). Promotes guard cell deflation in response to water deficit. Triggers root growth upon osmotic stress (e.g. mannitol containing medium). The chain is Transcription factor MYB60 from Arabidopsis thaliana (Mouse-ear cress).